The following is a 472-amino-acid chain: Bone morphogenetic protein 3 (472 aa).

A signal peptide spans 1–22; that stretch reads MAGASRLLFLWLGCFCVSLAQG. Positions 23-362 are excised as a propeptide; that stretch reads ERPKPPFPEL…EQTLKKARRK (340 aa). Positions 27–37 are enriched in basic and acidic residues; sequence PPFPELRKAVP. The interval 27–53 is disordered; sequence PPFPELRKAVPGDRTAGGGPDSELQPQ. Residues N117, N141, N175, and N220 are each glycosylated (N-linked (GlcNAc...) asparagine). The segment at 320-350 is disordered; the sequence is PYKTLQAQAPEKSKNKKKQRKGPHRKSQTLQ. Basic residues predominate over residues 333–346; it reads KNKKKQRKGPHRKS. 3 disulfide bridges follow: C370–C437, C399–C469, and C403–C471. N463 is a glycosylation site (N-linked (GlcNAc...) asparagine).

It belongs to the TGF-beta family. In terms of assembly, homodimer; disulfide-linked. Interacts with type II receptor ACVR2B. Expressed in adult and fetal cartilage.

The protein resides in the secreted. Functionally, growth factor of the TGF-beta superfamily that plays an essential role in developmental process by inducing and patterning early skeletal formation and by negatively regulating bone density. Antagonizes the ability of certain osteogenic BMPs to induce osteoprogenitor differentiation and ossification. Initiates signaling cascades by associating with type II receptor ACVR2B to activate SMAD2-dependent and SMAD-independent signaling cascades including TAK1 and JNK pathways. This chain is Bone morphogenetic protein 3 (BMP3), found in Homo sapiens (Human).